The chain runs to 940 residues: Isoleucine--tRNA ligase (940 aa).

A 'HIGH' region motif is present at residues 58-68 (PYANGSIHIGH). Position 564 (Glu564) interacts with L-isoleucyl-5'-AMP. The short motif at 605 to 609 (KMSKS) is the 'KMSKS' region element. Lys608 provides a ligand contact to ATP. Zn(2+) contacts are provided by Cys903, Cys906, Cys923, and Cys926.

The protein belongs to the class-I aminoacyl-tRNA synthetase family. IleS type 1 subfamily. As to quaternary structure, monomer. Zn(2+) is required as a cofactor.

It localises to the cytoplasm. The catalysed reaction is tRNA(Ile) + L-isoleucine + ATP = L-isoleucyl-tRNA(Ile) + AMP + diphosphate. Catalyzes the attachment of isoleucine to tRNA(Ile). As IleRS can inadvertently accommodate and process structurally similar amino acids such as valine, to avoid such errors it has two additional distinct tRNA(Ile)-dependent editing activities. One activity is designated as 'pretransfer' editing and involves the hydrolysis of activated Val-AMP. The other activity is designated 'posttransfer' editing and involves deacylation of mischarged Val-tRNA(Ile). This chain is Isoleucine--tRNA ligase, found in Shewanella sp. (strain MR-7).